The primary structure comprises 318 residues: Extracellular metalloprotease AO090012001025 (318 aa).

Residues 1 to 23 form the signal peptide; it reads MSHFPTLHILILVIANLQIQCFA. Residues Asn-106, Asn-121, and Asn-193 are each glycosylated (N-linked (GlcNAc...) asparagine). His-229 lines the Zn(2+) pocket. Glu-230 is a catalytic residue. Residue His-233 participates in Zn(2+) binding. Cysteines 268 and 295 form a disulfide.

This sequence belongs to the peptidase M43B family.

Its subcellular location is the secreted. In terms of biological role, secreted metalloproteinase that allows assimilation of proteinaceous substrates. This chain is Extracellular metalloprotease AO090012001025, found in Aspergillus oryzae (strain ATCC 42149 / RIB 40) (Yellow koji mold).